A 225-amino-acid chain; its full sequence is MTVLAVTGTDTGVGKTVTTAALACAARLARRDVAVCKPVQTGTIDGDDDLGEVRRLSGVTALHGGWRYPEPLAPVAAAGRAGAPLPTRTELVGSVRAVDAAGRLTIVEGAGGLLVALGADGVTLRDLAHDLGAQVLIVVSPGLGTLNHTALTLEALAAHGLSCAGLVIGAWPAEPGVAELDNRTALEALAPVRAVLPAGAGAASPERFEALSAAAFDADWITSLS.

12–17 provides a ligand contact to ATP; that stretch reads GVGKTV. Residue T16 coordinates Mg(2+). K37 is a catalytic residue. T41 contributes to the substrate binding site. ATP contacts are provided by residues D49, 108-111, and 197-199; these read EGAG and PAG. The Mg(2+) site is built by D49 and E108.

This sequence belongs to the dethiobiotin synthetase family. Homodimer. Mg(2+) is required as a cofactor.

It is found in the cytoplasm. The enzyme catalyses (7R,8S)-7,8-diammoniononanoate + CO2 + ATP = (4R,5S)-dethiobiotin + ADP + phosphate + 3 H(+). It participates in cofactor biosynthesis; biotin biosynthesis; biotin from 7,8-diaminononanoate: step 1/2. In terms of biological role, catalyzes a mechanistically unusual reaction, the ATP-dependent insertion of CO2 between the N7 and N8 nitrogen atoms of 7,8-diaminopelargonic acid (DAPA, also called 7,8-diammoniononanoate) to form a ureido ring. This Mycolicibacterium smegmatis (strain ATCC 700084 / mc(2)155) (Mycobacterium smegmatis) protein is ATP-dependent dethiobiotin synthetase BioD.